A 549-amino-acid polypeptide reads, in one-letter code: DNA 3'-5' helicase XPB (549 aa).

Residues 1–130 (MTDGPLIVQS…RNKKIAPMLG (130 aa)) form a required for protein stability or solubility region. A Helicase ATP-binding domain is found at 190–344 (ADSFWAGGSG…DVFSLIGPKR (155 aa)). 203–210 (LPCGAGKT) serves as a coordination point for ATP. The DEAH box motif lies at 298–301 (DEVH). A Helicase C-terminal domain is found at 399-545 (VVKSILAKHP…YIIRDADDLL (147 aa)).

The protein belongs to the helicase family. RAD25/XPB subfamily. Monomer. The cofactor is Mn(2+). Mg(2+) is required as a cofactor.

The catalysed reaction is Couples ATP hydrolysis with the unwinding of duplex DNA by translocating in the 3'-5' direction.. It catalyses the reaction ATP + H2O = ADP + phosphate + H(+). ATP-dependent 3'-5' DNA helicase, unwinds 3'-overhangs, 3'- flaps, and splayed-arm DNA substrates but not 5'-overhangs, 5'-flap substrates, 3-way junctions or Holliday junctions. Not highly efficient in vitro. Requires ATP hydrolysis for helicase activity; the ATPase activity is DNA-dependent and requires a minimum of 4 single-stranded nucleotides (nt) with 6-10 nt providing all necessary interactions for full processive unwinding. The ATPase prefers ATP over CTP or GTP, is almost inactive with TTP. DNA helicase activity requires ATP or dATP and only acts when the 3'-overhang is &gt;20 nt. Capable of unwinding a DNA:RNA hybrid if the 3'-overhang is DNA. Also catalyzes ATP-independent annealing of complementary DNA strands; annealing requires Mg(2+). The chain is DNA 3'-5' helicase XPB from Mycobacterium tuberculosis (strain ATCC 25618 / H37Rv).